The sequence spans 287 residues: Putative ABC transporter ATP-binding protein MM_1038 (287 aa).

The region spanning 5–238 (LENISVFYSR…ENVPLPPVAS (234 aa)) is the ABC transporter domain. ATP is bound at residue 40–47 (GEKGAGKS).

It belongs to the ABC transporter superfamily.

It is found in the cell membrane. Functionally, probably part of an ABC transporter complex. Responsible for energy coupling to the transport system. This chain is Putative ABC transporter ATP-binding protein MM_1038, found in Methanosarcina mazei (strain ATCC BAA-159 / DSM 3647 / Goe1 / Go1 / JCM 11833 / OCM 88) (Methanosarcina frisia).